The primary structure comprises 420 residues: Polymerase delta-interacting protein 3 (420 aa).

Alanine 2 bears the N-acetylalanine mark. Serine 5 carries the post-translational modification Phosphoserine. Arginine 33 is modified (omega-N-methylarginine). A Phosphoserine modification is found at serine 127. A Phosphothreonine modification is found at threonine 140. Lysine 200 participates in a covalent cross-link: Glycyl lysine isopeptide (Lys-Gly) (interchain with G-Cter in SUMO2). 2 positions are modified to phosphoserine: serine 215 and serine 217. Lysine 223 participates in a covalent cross-link: Glycyl lysine isopeptide (Lys-Gly) (interchain with G-Cter in SUMO2). A Phosphoserine modification is found at serine 244. Lysine 248 participates in a covalent cross-link: Glycyl lysine isopeptide (Lys-Gly) (interchain with G-Cter in SUMO2). Positions 256–277 (TLVNKEEPPKELPPAEPVLSPL) are disordered. Position 275 is a phosphoserine (serine 275). One can recognise an RRM domain in the interval 280–351 (TKMTVNNLHP…QPMKCNLHMN (72 aa)). The disordered stretch occupies residues 369–394 (PSVKKESELPRRGNPASSNPPAEVDP). The span at 370–379 (SVKKESELPR) shows a compositional bias: basic and acidic residues. Lysine 372 is covalently cross-linked (Glycyl lysine isopeptide (Lys-Gly) (interchain with G-Cter in SUMO2)). At serine 385 the chain carries Phosphoserine. A Glycyl lysine isopeptide (Lys-Gly) (interchain with G-Cter in SUMO2) cross-link involves residue lysine 417.

As to quaternary structure, interacts with POLD2. Interacts with NCBP1 and EIF4A3. Associates with the multiprotein exon junction complex (EJC). Interacts with RPS6KB1 (activated). Interacts with ERH. Interacts with THOC2, DDX39B and ZC3H11A; the interactions are ATP-dependent and indicative for an association with the TREX complex.

Its subcellular location is the nucleus. It localises to the nucleus speckle. The protein resides in the cytoplasm. Its function is as follows. Is involved in regulation of translation. Is preferentially associated with CBC-bound spliced mRNA-protein complexes during the pioneer round of mRNA translation. Contributes to enhanced translational efficiency of spliced over nonspliced mRNAs. Recruits activated ribosomal protein S6 kinase beta-1 I/RPS6KB1 to newly synthesized mRNA. Involved in nuclear mRNA export; probably mediated by association with the TREX complex. The sequence is that of Polymerase delta-interacting protein 3 (Poldip3) from Mus musculus (Mouse).